Here is a 546-residue protein sequence, read N- to C-terminus: Alpha-isocomene synthase (546 aa).

Residues aspartate 299, aspartate 303, aspartate 443, and glutamate 451 each contribute to the Mg(2+) site. A DDXXD motif motif is present at residues 299–303 (DDTYD).

Belongs to the terpene synthase family. Tpsa subfamily. Mg(2+) serves as cofactor. It depends on Mn(2+) as a cofactor. In terms of tissue distribution, highly expressed in roots, lower levels in stems and leaves and detected in disk florets, but not in ray florets.

It carries out the reaction (2E,6E)-farnesyl diphosphate = (-)-alpha-isocomene + diphosphate. It functions in the pathway secondary metabolite biosynthesis; terpenoid biosynthesis. Its function is as follows. Sesquiterpene synthase involved in the biosynthesis of alpha-isocomene as the major product and detectable amounts of beta-caryophyllene, beta-isocomene, silphinene and modeph-2-ene. Produces exclusively the (-)-(E)-beta caryophyllene enantiomer. In Matricaria chamomilla var. recutita (German chamomile), this protein is Alpha-isocomene synthase.